We begin with the raw amino-acid sequence, 122 residues long: Sarcocystatin-A (122 aa).

Residues Met-1–Pro-20 form the signal peptide. Gln-21 bears the Pyrrolidone carboxylic acid mark. A Secondary area of contact motif is present at residues Gln-67–Gly-71.

This sequence belongs to the cystatin family.

In terms of biological role, selectively inhibits the activity of cysteine proteinase of hemocytes, protecting developing adult tissue in pupae from attack by the proteinase. In Sarcophaga peregrina (Flesh fly), this protein is Sarcocystatin-A.